The following is a 470-amino-acid chain: Neuraminidase (470 aa).

At 1–14 (MNPNQKIITIGSIS) the chain is on the intravirion side. The involved in apical transport and lipid raft association stretch occupies residues 11-32 (GSISLGLVVFNVLLHVVSIIVT). The chain crosses the membrane as a helical span at residues 15–35 (LGLVVFNVLLHVVSIIVTVLV). The segment at 32 to 86 (TVLVLGKGGNNGICNETVVREYNETVRIEKVTQWHNTNVVEYVPYWNGGTYMNNT) is hypervariable stalk region. Topologically, residues 36–470 (LGKGGNNGIC…AILPFDIDKM (435 aa)) are virion surface. 3 N-linked (GlcNAc...) asparagine; by host glycosylation sites follow: Asn-46, Asn-54, and Asn-84. The tract at residues 89 to 470 (ICDAKGFAPF…AILPFDIDKM (382 aa)) is head of neuraminidase. 8 disulfides stabilise this stretch: Cys-90–Cys-417, Cys-122–Cys-127, Cys-182–Cys-229, Cys-231–Cys-236, Cys-277–Cys-290, Cys-279–Cys-288, Cys-316–Cys-335, and Cys-421–Cys-446. Residue Arg-116 participates in substrate binding. The N-linked (GlcNAc...) asparagine; by host glycan is linked to Asn-144. The Proton donor/acceptor role is filled by Asp-149. Arg-150 provides a ligand contact to substrate. 275-276 (EE) provides a ligand contact to substrate. Position 291 (Arg-291) interacts with substrate. Asp-292, Gly-296, and Asp-322 together coordinate Ca(2+). Arg-368 is a substrate binding site. Asn-398 carries an N-linked (GlcNAc...) asparagine; by host glycan. The active-site Nucleophile is Tyr-402.

The protein belongs to the glycosyl hydrolase 34 family. In terms of assembly, homotetramer. Requires Ca(2+) as cofactor. Post-translationally, N-glycosylated.

The protein resides in the virion membrane. It localises to the host apical cell membrane. The enzyme catalyses Hydrolysis of alpha-(2-&gt;3)-, alpha-(2-&gt;6)-, alpha-(2-&gt;8)- glycosidic linkages of terminal sialic acid residues in oligosaccharides, glycoproteins, glycolipids, colominic acid and synthetic substrates.. Inhibited by the neuraminidase inhibitors zanamivir (Relenza) and oseltamivir (Tamiflu). These drugs interfere with the release of progeny virus from infected cells and are effective against all influenza strains. Resistance to neuraminidase inhibitors is quite rare. Catalyzes the removal of terminal sialic acid residues from viral and cellular glycoconjugates. Cleaves off the terminal sialic acids on the glycosylated HA during virus budding to facilitate virus release. Additionally helps virus spread through the circulation by further removing sialic acids from the cell surface. These cleavages prevent self-aggregation and ensure the efficient spread of the progeny virus from cell to cell. Otherwise, infection would be limited to one round of replication. Described as a receptor-destroying enzyme because it cleaves a terminal sialic acid from the cellular receptors. May facilitate viral invasion of the upper airways by cleaving the sialic acid moieties on the mucin of the airway epithelial cells. Likely to plays a role in the budding process through its association with lipid rafts during intracellular transport. May additionally display a raft-association independent effect on budding. Plays a role in the determination of host range restriction on replication and virulence. Sialidase activity in late endosome/lysosome traffic seems to enhance virus replication. This Influenza A virus (strain A/Duck/Ukraine/1/1963 H3N8) protein is Neuraminidase.